Here is a 501-residue protein sequence, read N- to C-terminus: Raftlin-2 (501 aa).

Disordered stretches follow at residues 1–20 and 196–239; these read MGCG…GKIF and SWNE…RKGE. A lipid anchor (N-myristoyl glycine) is attached at G2. Residue C3 is the site of S-palmitoyl cysteine attachment. A compositionally biased stretch (polar residues) spans 220-233; sequence GQYQMEQNGSPTSS. S405 is subject to Phosphoserine. The interval 407–449 is disordered; the sequence is AQTPDKKASRHIKGEDKNKATSRSIGLDTTSSQPAESRHLPEE. At T409 the chain carries Phosphothreonine. Positions 410 to 425 are enriched in basic and acidic residues; the sequence is PDKKASRHIKGEDKNK. Positions 427 to 441 are enriched in polar residues; sequence TSRSIGLDTTSSQPA. Phosphoserine is present on S430.

Belongs to the raftlin family.

The protein resides in the cell membrane. Its function is as follows. Upon bacterial lipopolysaccharide stimulation, mediates clathrin-dependent internalization of TLR4 in dendritic cells, resulting in activation of TICAM1-mediated signaling and subsequent IFNB1 production. May regulate B-cell antigen receptor-mediated signaling. This chain is Raftlin-2 (RFTN2), found in Homo sapiens (Human).